A 362-amino-acid polypeptide reads, in one-letter code: Protein RecA (362 aa).

An ATP-binding site is contributed by 77-84; sequence GPESSGKT.

Belongs to the RecA family.

Its subcellular location is the cytoplasm. Can catalyze the hydrolysis of ATP in the presence of single-stranded DNA, the ATP-dependent uptake of single-stranded DNA by duplex DNA, and the ATP-dependent hybridization of homologous single-stranded DNAs. It interacts with LexA causing its activation and leading to its autocatalytic cleavage. This Rhizobium etli (strain ATCC 51251 / DSM 11541 / JCM 21823 / NBRC 15573 / CFN 42) protein is Protein RecA.